The chain runs to 327 residues: Phenylalanine--tRNA ligase alpha subunit (327 aa).

E252 is a binding site for Mg(2+).

This sequence belongs to the class-II aminoacyl-tRNA synthetase family. Phe-tRNA synthetase alpha subunit type 1 subfamily. Tetramer of two alpha and two beta subunits. Mg(2+) serves as cofactor.

Its subcellular location is the cytoplasm. The enzyme catalyses tRNA(Phe) + L-phenylalanine + ATP = L-phenylalanyl-tRNA(Phe) + AMP + diphosphate + H(+). This is Phenylalanine--tRNA ligase alpha subunit from Shewanella woodyi (strain ATCC 51908 / MS32).